Reading from the N-terminus, the 444-residue chain is Methylenetetrahydrofolate--tRNA-(uracil-5-)-methyltransferase TrmFO (444 aa).

Residue 10–15 participates in FAD binding; that stretch reads GAGLAG.

This sequence belongs to the MnmG family. TrmFO subfamily. The cofactor is FAD.

The protein resides in the cytoplasm. It catalyses the reaction uridine(54) in tRNA + (6R)-5,10-methylene-5,6,7,8-tetrahydrofolate + NADH + H(+) = 5-methyluridine(54) in tRNA + (6S)-5,6,7,8-tetrahydrofolate + NAD(+). The enzyme catalyses uridine(54) in tRNA + (6R)-5,10-methylene-5,6,7,8-tetrahydrofolate + NADPH + H(+) = 5-methyluridine(54) in tRNA + (6S)-5,6,7,8-tetrahydrofolate + NADP(+). Functionally, catalyzes the folate-dependent formation of 5-methyl-uridine at position 54 (M-5-U54) in all tRNAs. The sequence is that of Methylenetetrahydrofolate--tRNA-(uracil-5-)-methyltransferase TrmFO from Streptococcus agalactiae serotype Ia (strain ATCC 27591 / A909 / CDC SS700).